The primary structure comprises 252 residues: UPF0273 protein MK0039 (252 aa).

One can recognise a KaiC domain in the interval 4-248 (ERVSTGIPGM…VFVKERGEVR (245 aa)). An ATP-binding site is contributed by 31–38 (GGPGTGKT).

The protein belongs to the UPF0273 family.

The chain is UPF0273 protein MK0039 from Methanopyrus kandleri (strain AV19 / DSM 6324 / JCM 9639 / NBRC 100938).